The following is a 243-amino-acid chain: MTTNPKPVYQRILLKLSGEALQGEEGFGIDPATLDRMAQEVKELIELGVQVGVVIGGGNLFRGAGLAEAGMNRVVGDHMGMLATVMNGLAMRDALHRAYVNARVMSAIPLKGVCDDYNWADAIAQLRQGRVVIFSAGTGNPFFTTDSAACLRGIEIEADVVLKATKVDGVFTADPVSNPDAELYDKLSYSSVLEKELKVMDLAAFTLARDHNMPIRVFNMNKPGALRRVVMGETEGTLISNAE.

Residue 15-18 participates in ATP binding; sequence KLSG. An involved in allosteric activation by GTP region spans residues 23-28; sequence GEEGFG. Gly-57 lines the UMP pocket. Residues Gly-58 and Arg-62 each coordinate ATP. Residues Asp-77 and 138 to 145 contribute to the UMP site; that span reads TGNPFFTT. ATP contacts are provided by Thr-165, Phe-171, and Asp-174.

The protein belongs to the UMP kinase family. Homohexamer.

It is found in the cytoplasm. It carries out the reaction UMP + ATP = UDP + ADP. It functions in the pathway pyrimidine metabolism; CTP biosynthesis via de novo pathway; UDP from UMP (UMPK route): step 1/1. Its activity is regulated as follows. Allosterically activated by GTP. Inhibited by UTP. In terms of biological role, catalyzes the reversible phosphorylation of UMP to UDP. In Aliivibrio fischeri (strain ATCC 700601 / ES114) (Vibrio fischeri), this protein is Uridylate kinase.